The primary structure comprises 156 residues: Large ribosomal subunit protein uL15 (156 aa).

Over residues 1-11 (MKLNDLRDKPG) the composition is skewed to basic and acidic residues. A disordered region spans residues 1–40 (MKLNDLRDKPGSVKARKRVGRGIGSGTGKTGGRGVKGQKS). Positions 21-35 (RGIGSGTGKTGGRGV) are enriched in gly residues.

Belongs to the universal ribosomal protein uL15 family. In terms of assembly, part of the 50S ribosomal subunit.

Its function is as follows. Binds to the 23S rRNA. The chain is Large ribosomal subunit protein uL15 from Brucella anthropi (strain ATCC 49188 / DSM 6882 / CCUG 24695 / JCM 21032 / LMG 3331 / NBRC 15819 / NCTC 12168 / Alc 37) (Ochrobactrum anthropi).